Consider the following 245-residue polypeptide: 1-(5-phosphoribosyl)-5-[(5-phosphoribosylamino)methylideneamino] imidazole-4-carboxamide isomerase (245 aa).

D7 acts as the Proton acceptor in catalysis. D129 acts as the Proton donor in catalysis.

Belongs to the HisA/HisF family.

It is found in the cytoplasm. The catalysed reaction is 1-(5-phospho-beta-D-ribosyl)-5-[(5-phospho-beta-D-ribosylamino)methylideneamino]imidazole-4-carboxamide = 5-[(5-phospho-1-deoxy-D-ribulos-1-ylimino)methylamino]-1-(5-phospho-beta-D-ribosyl)imidazole-4-carboxamide. Its pathway is amino-acid biosynthesis; L-histidine biosynthesis; L-histidine from 5-phospho-alpha-D-ribose 1-diphosphate: step 4/9. This chain is 1-(5-phosphoribosyl)-5-[(5-phosphoribosylamino)methylideneamino] imidazole-4-carboxamide isomerase, found in Shewanella halifaxensis (strain HAW-EB4).